A 402-amino-acid chain; its full sequence is Calcium-responsive transactivator (402 aa).

Residues Met1 to Ser148 are N-terminal auto-inhibitory domain; necessary for interaction with SMARCA4/BRG1. The short motif at Tyr50–Ile53 is the SH2-binding element. 2 disordered regions span residues Gln72 to Gln171 and Ala221 to Gln402. A compositionally biased stretch (low complexity) spans Leu85–Ser106. Composition is skewed to polar residues over residues Asn128–Gly149 and Ser161–Gln171. Residues Gly149–Met238 are methionine-rich intra-molecular domain. Residues Met233–Gln251 are compositionally biased toward low complexity. The segment at Tyr252–Tyr323 is MFD domain. A compositionally biased stretch (polar residues) spans Glu261–Tyr277. Residues Ser296–Thr305 are compositionally biased toward basic and acidic residues. Positions Gly311–Tyr375 are enriched in low complexity. The segment at Asn340–Gln402 is necessary for nuclear localization. The SH2-binding signature appears at Ser359–Ser362. Over residues Arg376–Arg388 the composition is skewed to polar residues. The short motif at Thr377–Gln385 is the SH3-binding element. Over residues Tyr390–Gln402 the composition is skewed to low complexity. The necessary for interaction with CREBBP and for the recruitment of CREBBP to the nuclear bodies stretch occupies residues Glu393–Gln402. Positions Tyr397–Tyr400 match the SH2-binding motif.

Belongs to the SS18 family. Homodimer. Dimerization may be necessary for its function in neuronal dendritic development. Interacts (via C-terminus) with CREBBP (via N-terminus), EP300 and SMARCA4/BRG1. Interacts with the nBAF complex. Association with CREBBP facilitates transcription while the association with SMARCA4/BRG1 suppresses CREST-mediated transcription in resting neurons.

The protein localises to the nucleus. Its subcellular location is the chromosome. The protein resides in the centromere. It is found in the kinetochore. Its function is as follows. Transcriptional activator which is required for calcium-dependent dendritic growth and branching in cortical neurons. Recruits CREB-binding protein (CREBBP) to nuclear bodies. Component of the CREST-BRG1 complex, a multiprotein complex that regulates promoter activation by orchestrating a calcium-dependent release of a repressor complex and a recruitment of an activator complex. In resting neurons, transcription of the c-FOS promoter is inhibited by BRG1-dependent recruitment of a phospho-RB1-HDAC1 repressor complex. Upon calcium influx, RB1 is dephosphorylated by calcineurin, which leads to release of the repressor complex. At the same time, there is increased recruitment of CREBBP to the promoter by a CREST-dependent mechanism, which leads to transcriptional activation. The CREST-BRG1 complex also binds to the NR2B promoter, and activity-dependent induction of NR2B expression involves a release of HDAC1 and recruitment of CREBBP. The sequence is that of Calcium-responsive transactivator (Ss18l1) from Mus musculus (Mouse).